Reading from the N-terminus, the 116-residue chain is Phosphoribosyl-AMP cyclohydrolase (116 aa).

Asp82 provides a ligand contact to Mg(2+). A Zn(2+)-binding site is contributed by Cys83. Residues Asp84 and Asp86 each contribute to the Mg(2+) site. The Zn(2+) site is built by Cys99 and Cys106.

The protein belongs to the PRA-CH family. Homodimer. Requires Mg(2+) as cofactor. It depends on Zn(2+) as a cofactor.

The protein resides in the cytoplasm. It catalyses the reaction 1-(5-phospho-beta-D-ribosyl)-5'-AMP + H2O = 1-(5-phospho-beta-D-ribosyl)-5-[(5-phospho-beta-D-ribosylamino)methylideneamino]imidazole-4-carboxamide. It participates in amino-acid biosynthesis; L-histidine biosynthesis; L-histidine from 5-phospho-alpha-D-ribose 1-diphosphate: step 3/9. Functionally, catalyzes the hydrolysis of the adenine ring of phosphoribosyl-AMP. The protein is Phosphoribosyl-AMP cyclohydrolase of Saccharopolyspora erythraea (strain ATCC 11635 / DSM 40517 / JCM 4748 / NBRC 13426 / NCIMB 8594 / NRRL 2338).